We begin with the raw amino-acid sequence, 1077 residues long: ATP-dependent helicase/deoxyribonuclease subunit B (1077 aa).

Belongs to the helicase family. AddB/RexB type 2 subfamily. As to quaternary structure, heterodimer of AddA and RexB. Mg(2+) is required as a cofactor.

In terms of biological role, the heterodimer acts as both an ATP-dependent DNA helicase and an ATP-dependent, dual-direction single-stranded exonuclease. Recognizes the chi site generating a DNA molecule suitable for the initiation of homologous recombination. This subunit has 5' -&gt; 3' nuclease activity but not helicase activity. The polypeptide is ATP-dependent helicase/deoxyribonuclease subunit B (Streptococcus agalactiae serotype Ia (strain ATCC 27591 / A909 / CDC SS700)).